Here is a 626-residue protein sequence, read N- to C-terminus: MDEQEALDSIMKDLVALQMSRRTRLSGYETMKNKDTGHPNRQSDVRIKFEHNGERRIIAFSRPVRYEDVEHKVTTVFGQPLDLHYMNNELSILLKNQDDLDKAIDILDRSSSMKSLRILLLSQDRNHTSSSPHSGVSRQVRIKPSQSAGDINTIYQAPEPRSRHLSVSSQNPGRSSPPPGYVPERQQHIARQGSYTSINSEGEFIPETSEQCMLDPLSSAENSLSGSCQSLDRSADSPSFRKSQMSRARSFPDNRKECSDRETQLYDKGVKGGTYPRRYHVSVHHKDYNDGRRTFPRIRRHQGNLFTLVPSSRSLSTNGENMGVAVQYLDPRGRLRSADSENALTVQERNVPTKSPSAPINWRRGKLLGQGAFGRVYLCYDVDTGRELASKQVQFDPDSPETSKEVSALECEIQLLKNLQHERIVQYYGCLRDRAEKILTIFMEYMPGGSVKDQLKAYGALTESVTRKYTRQILEGMSYLHSNMIVHRDIKGANILRDSAGNVKLGDFGASKRLQTICMSGTGIRSVTGTPYWMSPEVISGEGYGRKADVWSLGCTVVEMLTEKPPWAEYEAMAAIFKIATQPTNPQLPSHISEHGRDFLRRIFVEARQRPSAEELLTHHFAQLVY.

Positions 44–123 (DVRIKFEHNG…KSLRILLLSQ (80 aa)) constitute a PB1 domain. Disordered regions lie at residues 125–184 (RNHT…YVPE) and 218–273 (SSAE…VKGG). Polar residues-rich tracts occupy residues 128–137 (TSSSPHSGVS), 144–155 (PSQSAGDINTIY), 165–174 (LSVSSQNPGR), and 219–247 (SAEN…QMSR). A phosphoserine mark is found at Ser-147 and Ser-166. 2 positions are modified to phosphoserine: Ser-250 and Ser-312. A compositionally biased stretch (basic and acidic residues) spans 250–270 (SFPDNRKECSDRETQLYDKGV). The residue at position 337 (Ser-337) is a Phosphoserine; by SGK1. A Phosphoserine modification is found at Ser-340. The Protein kinase domain maps to 362–622 (WRRGKLLGQG…AEELLTHHFA (261 aa)). Residues 368-376 (LGQGAFGRV) and Lys-391 each bind ATP. Asp-489 serves as the catalytic Proton acceptor.

This sequence belongs to the protein kinase superfamily. STE Ser/Thr protein kinase family. MAP kinase kinase kinase subfamily. As to quaternary structure, binds both upstream activators and downstream substrates in multimolecular complexes. Part of a complex with MAP2K3, RAC1 and CCM2. Interacts with MAP2K5 and SPAG9. The cofactor is Mg(2+). Phosphorylation at Ser-166 and Ser-337 by SGK1 inhibits its activity.

The enzyme catalyses L-seryl-[protein] + ATP = O-phospho-L-seryl-[protein] + ADP + H(+). It carries out the reaction L-threonyl-[protein] + ATP = O-phospho-L-threonyl-[protein] + ADP + H(+). With respect to regulation, activated by phosphorylation on Thr-530. Its function is as follows. Component of a protein kinase signal transduction cascade. Mediates activation of the NF-kappa-B, AP1 and DDIT3 transcriptional regulators. The polypeptide is Mitogen-activated protein kinase kinase kinase 3 (Map3k3) (Mus musculus (Mouse)).